Consider the following 383-residue polypeptide: Outer membrane protein S2 (383 aa).

The first 21 residues, 1 to 21 (MKRKVLALVIPALLAAGAAHA), serve as a signal peptide directing secretion.

Belongs to the Gram-negative porin family. In terms of assembly, homotrimer.

Its subcellular location is the cell outer membrane. Its function is as follows. Forms pores that allow passive diffusion of small molecules across the outer membrane. This chain is Outer membrane protein S2 (ompS2), found in Salmonella typhi.